The following is an 82-amino-acid chain: UPF0298 protein SPCG_0698 (82 aa).

The protein belongs to the UPF0298 family.

It is found in the cytoplasm. The sequence is that of UPF0298 protein SPCG_0698 from Streptococcus pneumoniae (strain CGSP14).